The sequence spans 640 residues: Chitin elicitor receptor kinase 1 (640 aa).

The first 31 residues, 1 to 31 (MKFQMKMKSELCRTYKYWLILLVLWLSGVTQ), serve as a signal peptide directing secretion. Topologically, residues 32-248 (RETGVLIVDA…GTVHWRSNVG (217 aa)) are extracellular. 3 cysteine pairs are disulfide-bonded: C43/C104, C49/C166, and C102/C164. 3 consecutive LysM domains span residues 53 to 98 (AYYR…NIYL), 113 to 160 (FSYT…SLTI), and 179 to 227 (STYV…KAAN). Chitin is bound by residues 119–125 (TNDTAEK) and 148–154 (DLSSIYS). A helical membrane pass occupies residues 249 to 269 (IIVGVVVGGIVLAVLLLFALI). At 270–640 (FGFKHFRRRK…SQPPSGNDQL (371 aa)) the chain is on the cytoplasmic side. Residues 286 to 308 (MQQSGLLSSSSMAGSKPSRSGST) form a disordered region. Over residues 289–307 (SGLLSSSSMAGSKPSRSGS) the composition is skewed to low complexity. The Protein kinase domain maps to 330–612 (FSLAKKIGQG…RFAVVQLMTL (283 aa)). Residues 336-344 (IGQGGFASV) and K357 contribute to the ATP site. D452 serves as the catalytic Proton acceptor.

It belongs to the protein kinase superfamily. Ser/Thr protein kinase family.

The protein localises to the cell membrane. It catalyses the reaction L-seryl-[protein] + ATP = O-phospho-L-seryl-[protein] + ADP + H(+). The catalysed reaction is L-threonyl-[protein] + ATP = O-phospho-L-threonyl-[protein] + ADP + H(+). Its function is as follows. Lysin motif (LysM) receptor kinase required as a cell surface receptor for chitin elicitor (chitooligosaccharides) signaling leading to innate immunity in response to biotic stresses. The CERK1, MEKK1a/b, MKK1a/b/c and MPK4a/b proteins are involved in pathogen defense. The pathway induces rapid growth inhibition, cell wall depositions and accumulation of defense-related transcripts. This protein is required for response to chitin. Is able to complement the A.thaliana cerk1 mutant. This is Chitin elicitor receptor kinase 1 from Physcomitrium patens (Spreading-leaved earth moss).